Here is a 1203-residue protein sequence, read N- to C-terminus: DNA-directed RNA polymerase subunit beta' (1203 aa).

Zn(2+)-binding residues include cysteine 60, cysteine 62, cysteine 75, and cysteine 78. The Mg(2+) site is built by aspartate 449, aspartate 451, and aspartate 453. Cysteine 818, cysteine 892, cysteine 899, and cysteine 902 together coordinate Zn(2+).

This sequence belongs to the RNA polymerase beta' chain family. In terms of assembly, the RNAP catalytic core consists of 2 alpha, 1 beta, 1 beta' and 1 omega subunit. When a sigma factor is associated with the core the holoenzyme is formed, which can initiate transcription. The cofactor is Mg(2+). Zn(2+) serves as cofactor.

The enzyme catalyses RNA(n) + a ribonucleoside 5'-triphosphate = RNA(n+1) + diphosphate. DNA-dependent RNA polymerase catalyzes the transcription of DNA into RNA using the four ribonucleoside triphosphates as substrates. The chain is DNA-directed RNA polymerase subunit beta' from Bacillus anthracis.